Reading from the N-terminus, the 177-residue chain is Large ribosomal subunit protein uL6 (177 aa).

Belongs to the universal ribosomal protein uL6 family. Part of the 50S ribosomal subunit.

This protein binds to the 23S rRNA, and is important in its secondary structure. It is located near the subunit interface in the base of the L7/L12 stalk, and near the tRNA binding site of the peptidyltransferase center. The protein is Large ribosomal subunit protein uL6 of Rhodospirillum rubrum (strain ATCC 11170 / ATH 1.1.1 / DSM 467 / LMG 4362 / NCIMB 8255 / S1).